The primary structure comprises 409 residues: Sharpin (409 aa).

The self-association stretch occupies residues 1-178; the sequence is MAPPAGGTAA…EKEELAGRLT (178 aa). Positions 121 to 164 are disordered; sequence EGQNGSDSLPPALGPETRPVSPPSPLEVPTPKAPKPKVDLPWSP. A compositionally biased stretch (pro residues) spans 140–153; sequence VSPPSPLEVPTPKA. Phosphoserine is present on Ser163. The interval 173–300 is interaction with SHANK1; the sequence is LAGRLTRAVE…LLSAPREAPG (128 aa). Positions 217–280 constitute a Ubiquitin-like domain; the sequence is IRLQVTVEDA…PEHSLAFYGV (64 aa). Phosphoserine is present on Ser302. Positions 315–337 are disordered; the sequence is RLFPQSLGLPPTPQPTSSSLPSP. A compositionally biased stretch (low complexity) spans 318–336; the sequence is PQSLGLPPTPQPTSSSLPS. Residues 338–367 form a RanBP2-type zinc finger; sequence LQPGWPCPSCTFINAPSRPGCEMCSTQRPC. Positions 384 to 409 are disordered; that stretch reads TRREDGPSLPGPRSLDPLLNLSGNLC.

In terms of assembly, monomer and homodimer. Component of the LUBAC complex (linear ubiquitin chain assembly complex) which consists of SHARPIN, RBCK1 and RNF31. LUBAC has a MW of approximately 600 kDa suggesting a heteromultimeric assembly of its subunits. Associates with the TNF-R1 signaling complex (TNF-RSC) in a stimulation-dependent manner. Interacts with EYA1, EYA2, SHANK1 and SHANK3 (via ANK repeats).

The protein resides in the cytoplasm. The protein localises to the cytosol. Its subcellular location is the synapse. Its pathway is protein modification; protein ubiquitination. Functionally, component of the LUBAC complex which conjugates linear polyubiquitin chains in a head-to-tail manner to substrates and plays a key role in NF-kappa-B activation and regulation of inflammation. LUBAC conjugates linear polyubiquitin to IKBKG and RIPK1 and is involved in activation of the canonical NF-kappa-B and the JNK signaling pathways. Linear ubiquitination mediated by the LUBAC complex interferes with TNF-induced cell death and thereby prevents inflammation. LUBAC is recruited to the TNF-R1 signaling complex (TNF-RSC) following polyubiquitination of TNF-RSC components by BIRC2 and/or BIRC3 and to conjugate linear polyubiquitin to IKBKG and possibly other components contributing to the stability of the complex. The LUBAC complex is also involved in innate immunity by conjugating linear polyubiquitin chains at the surface of bacteria invading the cytosol to form the ubiquitin coat surrounding bacteria. LUBAC is not able to initiate formation of the bacterial ubiquitin coat, and can only promote formation of linear polyubiquitins on pre-existing ubiquitin. The bacterial ubiquitin coat acts as an 'eat-me' signal for xenophagy and promotes NF-kappa-B activation. Together with OTULIN, the LUBAC complex regulates the canonical Wnt signaling during angiogenesis. This Bos taurus (Bovine) protein is Sharpin (SHARPIN).